A 320-amino-acid polypeptide reads, in one-letter code: Olfactory receptor 52N1 (320 aa).

Residues 1 to 27 lie on the Extracellular side of the membrane; that stretch reads MSFLNGTSLTPASFILNGIPGLEDVHL. The N-linked (GlcNAc...) asparagine glycan is linked to Asn5. The helical transmembrane segment at 28–48 threads the bilayer; the sequence is WISFPLCTMYSIAITGNFGLM. Residues 49-56 are Cytoplasmic-facing; the sequence is YLIYCDEA. The helical transmembrane segment at 57-77 threads the bilayer; that stretch reads LHRPMYVFLALLSFTDVLMCT. Residues 78–101 lie on the Extracellular side of the membrane; sequence STLPNTLFILWFNLKEIDFKACLA. A disulfide bond links Cys99 and Cys191. A helical membrane pass occupies residues 102 to 122; it reads QMFFVHTFTGMESGVLMLMAL. Topologically, residues 123 to 141 are cytoplasmic; sequence DHCVAICFPLRYATILTNS. Residues 142 to 162 traverse the membrane as a helical segment; it reads VIAKAGFLTFLRGVMLVIPST. Topologically, residues 163–198 are extracellular; the sequence is FLTKRLPYCKGNVIPHTYCDHMSVAKISCGNVRVNA. A helical transmembrane segment spans residues 199-219; the sequence is IYGLIVALLIGGFDILCITIS. Topologically, residues 220-239 are cytoplasmic; the sequence is YTMILQAVVSLSSADARQKA. Residues 240-260 form a helical membrane-spanning segment; it reads FSTCTAHFCAIVLTYVPAFFT. Over 261-276 the chain is Extracellular; it reads FFTHHFGGHTIPLHIH. Residues 277–297 form a helical membrane-spanning segment; the sequence is IIMANLYLLMPPTMNPIVYGV. Over 298–320 the chain is Cytoplasmic; that stretch reads KTRQVRESVIRFFLKGKDNSHNF.

The protein belongs to the G-protein coupled receptor 1 family.

The protein resides in the cell membrane. Functionally, odorant receptor. The protein is Olfactory receptor 52N1 (OR52N1) of Homo sapiens (Human).